The following is a 363-amino-acid chain: UDP-N-acetylglucosamine--N-acetylmuramyl-(pentapeptide) pyrophosphoryl-undecaprenol N-acetylglucosamine transferase (363 aa).

UDP-N-acetyl-alpha-D-glucosamine contacts are provided by residues 12-14 (TAG), S196, and Q291.

The protein belongs to the glycosyltransferase 28 family. MurG subfamily.

It is found in the cell inner membrane. It catalyses the reaction di-trans,octa-cis-undecaprenyl diphospho-N-acetyl-alpha-D-muramoyl-L-alanyl-D-glutamyl-meso-2,6-diaminopimeloyl-D-alanyl-D-alanine + UDP-N-acetyl-alpha-D-glucosamine = di-trans,octa-cis-undecaprenyl diphospho-[N-acetyl-alpha-D-glucosaminyl-(1-&gt;4)]-N-acetyl-alpha-D-muramoyl-L-alanyl-D-glutamyl-meso-2,6-diaminopimeloyl-D-alanyl-D-alanine + UDP + H(+). It functions in the pathway cell wall biogenesis; peptidoglycan biosynthesis. Cell wall formation. Catalyzes the transfer of a GlcNAc subunit on undecaprenyl-pyrophosphoryl-MurNAc-pentapeptide (lipid intermediate I) to form undecaprenyl-pyrophosphoryl-MurNAc-(pentapeptide)GlcNAc (lipid intermediate II). This is UDP-N-acetylglucosamine--N-acetylmuramyl-(pentapeptide) pyrophosphoryl-undecaprenol N-acetylglucosamine transferase from Legionella pneumophila (strain Corby).